A 250-amino-acid polypeptide reads, in one-letter code: 5-oxoprolinase subunit A (250 aa).

The protein belongs to the LamB/PxpA family. As to quaternary structure, forms a complex composed of PxpA, PxpB and PxpC.

The enzyme catalyses 5-oxo-L-proline + ATP + 2 H2O = L-glutamate + ADP + phosphate + H(+). Functionally, catalyzes the cleavage of 5-oxoproline to form L-glutamate coupled to the hydrolysis of ATP to ADP and inorganic phosphate. The sequence is that of 5-oxoprolinase subunit A from Paraburkholderia phytofirmans (strain DSM 17436 / LMG 22146 / PsJN) (Burkholderia phytofirmans).